Consider the following 589-residue polypeptide: (E)-beta-ocimene synthase, chloroplastic (589 aa).

The transit peptide at 1–25 directs the protein to the chloroplast; sequence MAAHNLCFNSAFVCNVHHQKTQHFP. The (2E,6E)-farnesyl diphosphate site is built by Arg-302, Asp-339, Asp-343, Arg-480, and Asn-483. Mg(2+)-binding residues include Asp-339 and Asp-343. Residues 339-343 carry the DDXXD motif motif; it reads DDIYD. Mg(2+)-binding residues include Asn-483, Thr-487, and Glu-491.

Belongs to the terpene synthase family. Tpsb subfamily. Requires Mg(2+) as cofactor. The cofactor is Mn(2+). In terms of tissue distribution, expressed exclusively in flowers.

It is found in the plastid. Its subcellular location is the chloroplast. The catalysed reaction is (2E,6E)-farnesyl diphosphate = (3E,6E)-alpha-farnesene + diphosphate. It functions in the pathway secondary metabolite biosynthesis; terpenoid biosynthesis. Functionally, predominantly involved in monoterpene (C10) biosynthesis. Using GPP as substrate, the major product is (E)-beta-ocimene with minor amounts of (Z)-beta-ocimene and myrcene. Using FPP as substrate, could also be able to synthesize in vitro sesquiterpenes (C15) with (E,E)-alpha-farnesene as the major product and with (Z,E)-alpha-farnesene and (E,E)-beta-farnesene as minor products. The chain is (E)-beta-ocimene synthase, chloroplastic (TPS02) from Arabidopsis thaliana (Mouse-ear cress).